The sequence spans 311 residues: Tyrosine recombinase XerD (311 aa).

The 86-residue stretch at 3–88 folds into the Core-binding (CB) domain; the sequence is DMSAAYVEAF…ALRQFYKFLY (86 aa). The 190-residue stretch at 109–298 folds into the Tyr recombinase domain; that stretch reads TLPKTLSIED…LEERLHDLVQ (190 aa). Catalysis depends on residues arginine 156, lysine 180, histidine 250, arginine 253, and histidine 276. Catalysis depends on tyrosine 285, which acts as the O-(3'-phospho-DNA)-tyrosine intermediate.

It belongs to the 'phage' integrase family. XerD subfamily. In terms of assembly, forms a cyclic heterotetrameric complex composed of two molecules of XerC and two molecules of XerD.

The protein resides in the cytoplasm. Functionally, site-specific tyrosine recombinase, which acts by catalyzing the cutting and rejoining of the recombining DNA molecules. The XerC-XerD complex is essential to convert dimers of the bacterial chromosome into monomers to permit their segregation at cell division. It also contributes to the segregational stability of plasmids. This is Tyrosine recombinase XerD from Rhizobium meliloti (strain 1021) (Ensifer meliloti).